Reading from the N-terminus, the 158-residue chain is Phosphopantetheine adenylyltransferase (158 aa).

S8 contributes to the substrate binding site. Residues 8 to 9 (SF) and H16 each bind ATP. Substrate is bound by residues K40, T72, and R86. ATP contacts are provided by residues 87-89 (GLR), E97, and 122-128 (HSFLSSS).

The protein belongs to the bacterial CoaD family. Homohexamer. Requires Mg(2+) as cofactor.

Its subcellular location is the cytoplasm. It carries out the reaction (R)-4'-phosphopantetheine + ATP + H(+) = 3'-dephospho-CoA + diphosphate. The protein operates within cofactor biosynthesis; coenzyme A biosynthesis; CoA from (R)-pantothenate: step 4/5. Reversibly transfers an adenylyl group from ATP to 4'-phosphopantetheine, yielding dephospho-CoA (dPCoA) and pyrophosphate. This Prochlorococcus marinus (strain NATL1A) protein is Phosphopantetheine adenylyltransferase.